Here is a 364-residue protein sequence, read N- to C-terminus: A-type ATP synthase subunit C (364 aa).

It belongs to the V-ATPase V0D/AC39 subunit family. Has multiple subunits with at least A(3), B(3), C, D, E, F, H, I and proteolipid K(x).

The protein resides in the cell membrane. Its function is as follows. Component of the A-type ATP synthase that produces ATP from ADP in the presence of a proton gradient across the membrane. The sequence is that of A-type ATP synthase subunit C from Desulfurococcus sp. (strain SY).